A 122-amino-acid polypeptide reads, in one-letter code: Large ribosomal subunit protein uL22 (122 aa).

This sequence belongs to the universal ribosomal protein uL22 family. As to quaternary structure, part of the 50S ribosomal subunit.

In terms of biological role, this protein binds specifically to 23S rRNA; its binding is stimulated by other ribosomal proteins, e.g. L4, L17, and L20. It is important during the early stages of 50S assembly. It makes multiple contacts with different domains of the 23S rRNA in the assembled 50S subunit and ribosome. The globular domain of the protein is located near the polypeptide exit tunnel on the outside of the subunit, while an extended beta-hairpin is found that lines the wall of the exit tunnel in the center of the 70S ribosome. The protein is Large ribosomal subunit protein uL22 of Prochlorococcus marinus (strain MIT 9303).